The chain runs to 262 residues: Protein NEGATIVE GRAVITROPIC RESPONSE OF ROOTS (262 aa).

The disordered stretch occupies residues 1–40 (MKFFNWMQNKLGGKQENRKSNTSTSTTYAKPEPREEFSDW). The short motif at 43-49 (SLLAIGT) is the IGT motif element.

This sequence belongs to the LAZY family.

Its function is as follows. Involved in the control of root gravitropism. In Medicago truncatula (Barrel medic), this protein is Protein NEGATIVE GRAVITROPIC RESPONSE OF ROOTS.